The chain runs to 129 residues: Fluoride-specific ion channel FluC 1 (129 aa).

3 helical membrane passes run 43–63 (ASLL…PAWV), 68–88 (VVSL…TFSY), and 100–120 (LLAA…AALG). Na(+) contacts are provided by glycine 78 and serine 81.

It belongs to the fluoride channel Fluc/FEX (TC 1.A.43) family.

The protein resides in the cell membrane. The enzyme catalyses fluoride(in) = fluoride(out). With respect to regulation, na(+) is not transported, but it plays an essential structural role and its presence is essential for fluoride channel function. Functionally, fluoride-specific ion channel. Important for reducing fluoride concentration in the cell, thus reducing its toxicity. The protein is Fluoride-specific ion channel FluC 1 of Frankia casuarinae (strain DSM 45818 / CECT 9043 / HFP020203 / CcI3).